The primary structure comprises 466 residues: Replicative helicase loading/DNA remodeling protein DnaB (466 aa).

A DDBH1 region spans residues 3-113 (RQAFEFGLRP…ETQFVYQLIQ (111 aa)). The DDBH2-1 stretch occupies residues 200 to 292 (EMLRQMLGKH…TSSSAGKSSE (93 aa)). Residues 293-401 (VNPKPQSDEW…QPKNEGSSGN (109 aa)) form a DDBH2-2 region.

This sequence belongs to the DnaB/DnaD family. As to quaternary structure, homotetramer, higher-order oligomers are induced by ssDNA. The DNA replisome assembles sequentially on oriC in this order; DnaA, DnaD, DnaB, DnaI-DnaC helicase. Part of the replication restart primosome, PriA binds first, then DnaD and subsequently DnaB bind.

Its function is as follows. Helps DnaI load the DnaC replicative helicase onto single-stranded (ss)DNA. During DNA replication from the origin of replication (oriC) in the DNA replisome, DnaB and DnaD are required after DnaA and before subsequent helicase DnaC loading. Component of the replication restart primosome, which reloads the replicative helicase on sites other than oriC. Essential for replication initiation of the chromosome and plasmids. Remodels DNA, laterally compacts supercoiled plasmid and linear DNA. Binds supercoiled, nicked and linear double-stranded (ds)DNA and phage phiX174 single-stranded (ss)DNA; phiX174 ssDNA is a better substrate than for B.subtilis. No binding to phage M13 ssDNA although it induces oligomers. In Staphylococcus aureus (strain NCTC 8325 / PS 47), this protein is Replicative helicase loading/DNA remodeling protein DnaB.